The primary structure comprises 1755 residues: Transposon TyH3 Gag-Pol polyprotein (1755 aa).

Polar residues-rich tracts occupy residues 1–23, 48–60, and 127–152; these read MESQ…SVTS, TKAN…TPAS, and QSQF…GNTF. Disordered regions lie at residues 1–93, 126–173, and 352–421; these read MESQ…MMTQ, PQSQ…RPPP, and GSRN…SKST. Positions 153–165 are enriched in low complexity; the sequence is TDSSSADSDMTST. Residues 299 to 401 form an RNA-binding region; the sequence is NNGIHINNKV…NSKSKTARAH (103 aa). Over residues 402–418 the composition is skewed to low complexity; the sequence is NVSTSNNSPSTDNDSIS. Phosphoserine is present on Ser-416. Asp-461 (for protease activity; shared with dimeric partner) is an active-site residue. Residues 583-640 are integrase-type zinc finger-like; it reads NVHTSESTRKYPYPFIHRMLAHANAQTIRYSLKNNTITYFNESDVDWSSAIDYQCPDC. The Integrase catalytic domain maps to 660-835; the sequence is NSYEPFQYLH…AGLDISTLLP (176 aa). Mg(2+) is bound by residues Asp-671 and Asp-736. Disordered regions lie at residues 956 to 1087, 1092 to 1111, and 1130 to 1187; these read SKAV…ETEK, RSPS…NIVP, and DLPL…DNET. Over residues 960 to 969 the composition is skewed to low complexity; that stretch reads SPTDSTPPST. Residues 1005–1015 are compositionally biased toward polar residues; it reads STPQISNIEST. Basic and acidic residues predominate over residues 1038–1053; it reads ESSHASKSKDFRHSDS. 2 stretches are compositionally biased toward polar residues: residues 1054-1082 and 1101-1111; these read YSEN…QISD and PENNSSHNIVP. A Bipartite nuclear localization signal motif is present at residues 1178–1212; sequence KKRSLEDNETEIKVSRDTWNTKNMRSLEPPRSKKR. The region spanning 1338–1476 is the Reverse transcriptase Ty1/copia-type domain; the sequence is NNYYITQLDI…DILGLEIKYQ (139 aa). 6 residues coordinate Mg(2+): Asp-1346, Asp-1427, Asp-1428, Asp-1610, Glu-1652, and Asp-1685. In terms of domain architecture, RNase H Ty1/copia-type spans 1610 to 1752; that stretch reads DASYGNQPYY…IKTFKLLTNK (143 aa).

As to quaternary structure, the capsid protein forms a homotrimer, from which the VLPs are assembled. The protease is a homodimer, whose active site consists of two apposed aspartic acid residues. Post-translationally, initially, virus-like particles (VLPs) are composed of the structural unprocessed proteins Gag and Gag-Pol, and also contain the host initiator methionine tRNA (tRNA(i)-Met) which serves as a primer for minus-strand DNA synthesis, and a dimer of genomic Ty RNA. Processing of the polyproteins occurs within the particle and proceeds by an ordered pathway, called maturation. First, the protease (PR) is released by autocatalytic cleavage of the Gag-Pol polyprotein yielding capsid protein p45 and a Pol-p154 precursor protein. This cleavage is a prerequisite for subsequent processing of Pol-p154 at the remaining sites to release the mature structural and catalytic proteins. Maturation takes place prior to the RT reaction and is required to produce transposition-competent VLPs.

Its subcellular location is the cytoplasm. It is found in the nucleus. The catalysed reaction is DNA(n) + a 2'-deoxyribonucleoside 5'-triphosphate = DNA(n+1) + diphosphate. The enzyme catalyses Endonucleolytic cleavage to 5'-phosphomonoester.. Its function is as follows. Capsid protein (CA) is the structural component of the virus-like particle (VLP), forming the shell that encapsulates the retrotransposons dimeric RNA genome. The particles are assembled from trimer-clustered units and there are holes in the capsid shells that allow for the diffusion of macromolecules. CA also has nucleocapsid-like chaperone activity, promoting primer tRNA(i)-Met annealing to the multipartite primer-binding site (PBS), dimerization of Ty1 RNA and initiation of reverse transcription. In terms of biological role, the aspartyl protease (PR) mediates the proteolytic cleavages of the Gag and Gag-Pol polyproteins after assembly of the VLP. Functionally, reverse transcriptase/ribonuclease H (RT) is a multifunctional enzyme that catalyzes the conversion of the retro-elements RNA genome into dsDNA within the VLP. The enzyme displays a DNA polymerase activity that can copy either DNA or RNA templates, and a ribonuclease H (RNase H) activity that cleaves the RNA strand of RNA-DNA heteroduplexes during plus-strand synthesis and hydrolyzes RNA primers. The conversion leads to a linear dsDNA copy of the retrotransposon that includes long terminal repeats (LTRs) at both ends. Integrase (IN) targets the VLP to the nucleus, where a subparticle preintegration complex (PIC) containing at least integrase and the newly synthesized dsDNA copy of the retrotransposon must transit the nuclear membrane. Once in the nucleus, integrase performs the integration of the dsDNA into the host genome. This chain is Transposon TyH3 Gag-Pol polyprotein (TY1B), found in Saccharomyces cerevisiae (Baker's yeast).